The sequence spans 86 residues: Neurotoxin LmNaTx1 (86 aa).

The N-terminal stretch at 1 to 18 (MKILIIFVIAITVVGVQS) is a signal peptide. Residues 19–85 (KDGYPIYSTG…VWTYAENTCG (67 aa)) enclose the LCN-type CS-alpha/beta domain. Cystine bridges form between Cys33-Cys84, Cys37-Cys58, Cys44-Cys65, and Cys48-Cys67. Residue Cys84 is modified to Cysteine amide.

Belongs to the long (4 C-C) scorpion toxin superfamily. Sodium channel inhibitor family. Beta subfamily. Expressed by the venom gland.

It is found in the secreted. Functionally, binds voltage-independently at site-4 of sodium channels (Nav) and shift the voltage of activation toward more negative potentials thereby affecting sodium channel activation and promoting spontaneous and repetitive firing. In Lychas mucronatus (Chinese swimming scorpion), this protein is Neurotoxin LmNaTx1.